A 563-amino-acid polypeptide reads, in one-letter code: Arginine--tRNA ligase (563 aa).

This sequence belongs to the class-I aminoacyl-tRNA synthetase family. In terms of assembly, monomer.

It carries out the reaction tRNA(Arg) + L-arginine + ATP = L-arginyl-tRNA(Arg) + AMP + diphosphate. This is Arginine--tRNA ligase from Encephalitozoon cuniculi (strain GB-M1) (Microsporidian parasite).